Here is a 307-residue protein sequence, read N- to C-terminus: MKKVAVIGTGVIGNGWITRFLANGCEVVAHDPAPGAKERTIQAIENAWESVEQLGLKEGASKDSLTFVDSIEEAVKDADLIQESVPERYELKHGVLKEIDRFAHSNTIIGSSTSGIKPTDLQIGLNHPERLVVAHPFNPVYLLPLVEIVGGEATTKEITNRASVYYESLQMKPMVIEKEIEGFVADRLMEALWREALHLVNDGIATTEEVDKAITYGAGLRWAQMGPFMTFHLAGGNAGMRHMLEQFGPALKLPWTKLEAPELTDELKERVIQGCETHANDRSVEELEKKRNEFLVKLIDLVEDYWP.

8–13 lines the NAD(+) pocket; the sequence is GTGVIG.

Belongs to the 3-hydroxyacyl-CoA dehydrogenase family. L-carnitine dehydrogenase subfamily. Homodimer.

The protein localises to the cytoplasm. It carries out the reaction carnitine + NAD(+) = 3-dehydrocarnitine + NADH + H(+). Its pathway is amine and polyamine metabolism; carnitine metabolism. Functionally, catalyzes the NAD(+)-dependent oxidation of L-carnitine to 3-dehydrocarnitine. This chain is L-carnitine dehydrogenase, found in Oceanobacillus iheyensis (strain DSM 14371 / CIP 107618 / JCM 11309 / KCTC 3954 / HTE831).